A 332-amino-acid chain; its full sequence is Acetyl-coenzyme A carboxylase carboxyl transferase subunit alpha (332 aa).

A CoA carboxyltransferase C-terminal domain is found at 44–298 (QLESRAQNLR…KETLVNNLEE (255 aa)).

Belongs to the AccA family. Acetyl-CoA carboxylase is a heterohexamer composed of biotin carboxyl carrier protein (AccB), biotin carboxylase (AccC) and two subunits each of ACCase subunit alpha (AccA) and ACCase subunit beta (AccD).

The protein localises to the cytoplasm. The enzyme catalyses N(6)-carboxybiotinyl-L-lysyl-[protein] + acetyl-CoA = N(6)-biotinyl-L-lysyl-[protein] + malonyl-CoA. It participates in lipid metabolism; malonyl-CoA biosynthesis; malonyl-CoA from acetyl-CoA: step 1/1. In terms of biological role, component of the acetyl coenzyme A carboxylase (ACC) complex. First, biotin carboxylase catalyzes the carboxylation of biotin on its carrier protein (BCCP) and then the CO(2) group is transferred by the carboxyltransferase to acetyl-CoA to form malonyl-CoA. This chain is Acetyl-coenzyme A carboxylase carboxyl transferase subunit alpha, found in Crocosphaera subtropica (strain ATCC 51142 / BH68) (Cyanothece sp. (strain ATCC 51142)).